The chain runs to 489 residues: ATF/CREB activator 1 (489 aa).

The 64-residue stretch at Ala384–His447 folds into the bZIP domain. The tract at residues Lys386 to Lys406 is basic motif. Positions Leu412–Ile419 are leucine-zipper.

Belongs to the bZIP family.

The protein localises to the nucleus. In terms of biological role, transcriptional activator of promoters containing ATF/CREB sites. Can independently stimulate transcription through ATF/CREB sites. Important for a variety of biological functions including growth on non-optimal carbon sources. Regulates the expression of COS8. Has efficient silencing blocking activities. The protein is ATF/CREB activator 1 (ACA1) of Saccharomyces cerevisiae (strain ATCC 204508 / S288c) (Baker's yeast).